Consider the following 159-residue polypeptide: Ribosomal RNA large subunit methyltransferase H (159 aa).

Residues Leu-76, Gly-108, and 127–132 (FSKMTL) each bind S-adenosyl-L-methionine.

It belongs to the RNA methyltransferase RlmH family. As to quaternary structure, homodimer.

The protein localises to the cytoplasm. The enzyme catalyses pseudouridine(1915) in 23S rRNA + S-adenosyl-L-methionine = N(3)-methylpseudouridine(1915) in 23S rRNA + S-adenosyl-L-homocysteine + H(+). In terms of biological role, specifically methylates the pseudouridine at position 1915 (m3Psi1915) in 23S rRNA. The protein is Ribosomal RNA large subunit methyltransferase H of Bacillus cytotoxicus (strain DSM 22905 / CIP 110041 / 391-98 / NVH 391-98).